A 51-amino-acid chain; its full sequence is Putative antitoxin VapB6 (51 aa).

In terms of biological role, antitoxin component of a possible type II toxin-antitoxin (TA) system. The cognate toxin is VapC6. This Mycobacterium tuberculosis (strain CDC 1551 / Oshkosh) protein is Putative antitoxin VapB6 (vapB6).